The chain runs to 407 residues: Peptidase T (407 aa).

Histidine 81 provides a ligand contact to Zn(2+). Aspartate 83 is a catalytic residue. Residue aspartate 142 coordinates Zn(2+). Glutamate 176 acts as the Proton acceptor in catalysis. Zn(2+) is bound by residues glutamate 177, aspartate 199, and histidine 381.

This sequence belongs to the peptidase M20B family. Requires Zn(2+) as cofactor.

The protein localises to the cytoplasm. The enzyme catalyses Release of the N-terminal residue from a tripeptide.. Its function is as follows. Cleaves the N-terminal amino acid of tripeptides. The protein is Peptidase T of Streptococcus pneumoniae (strain P1031).